The chain runs to 396 residues: Tryptophan synthase beta chain (396 aa).

Position 88 is an N6-(pyridoxal phosphate)lysine (K88).

It belongs to the TrpB family. Tetramer of two alpha and two beta chains. Requires pyridoxal 5'-phosphate as cofactor.

The enzyme catalyses (1S,2R)-1-C-(indol-3-yl)glycerol 3-phosphate + L-serine = D-glyceraldehyde 3-phosphate + L-tryptophan + H2O. It participates in amino-acid biosynthesis; L-tryptophan biosynthesis; L-tryptophan from chorismate: step 5/5. In terms of biological role, the beta subunit is responsible for the synthesis of L-tryptophan from indole and L-serine. This chain is Tryptophan synthase beta chain, found in Actinobacillus pleuropneumoniae serotype 3 (strain JL03).